A 586-amino-acid chain; its full sequence is A-type ATP synthase subunit A (586 aa).

ATP is bound at residue 232–239 (GPFGSGKT).

This sequence belongs to the ATPase alpha/beta chains family. In terms of assembly, has multiple subunits with at least A(3), B(3), C, D, E, F, H, I and proteolipid K(x).

It localises to the cell membrane. It catalyses the reaction ATP + H2O + 4 H(+)(in) = ADP + phosphate + 5 H(+)(out). Component of the A-type ATP synthase that produces ATP from ADP in the presence of a proton gradient across the membrane. The A chain is the catalytic subunit. This is A-type ATP synthase subunit A from Methanococcus maripaludis (strain C5 / ATCC BAA-1333).